A 151-amino-acid polypeptide reads, in one-letter code: Probable cGMP 3',5'-cyclic phosphodiesterase subunit delta (151 aa).

Belongs to the PDE6D/unc-119 family. As to quaternary structure, interacts with Pde6.

The protein resides in the nucleus. Its subcellular location is the cytoplasm. This is Probable cGMP 3',5'-cyclic phosphodiesterase subunit delta from Drosophila erecta (Fruit fly).